Reading from the N-terminus, the 216-residue chain is MLAIKTRVKTAKGRKLSSTRWLHRHLNDQYVQKTNKDSYRSRSAYKLIEIDNKFKLLQAGQKIVDLGASPGGWSQVASQKGVKVVAIDIKPVNTISGVKYIQYDINELETLRERFKDQKFDVILSDMAPESCGLKSLDHIRIMLLCEAALNFAKHFLNYGGKFVVKIFQGESDKDFYNELKKMFKIVKYFKPKSSRSESTEMYLVGLGFISNSFPI.

G71, W73, D88, D104, and D126 together coordinate S-adenosyl-L-methionine. Residue K166 is the Proton acceptor of the active site.

It belongs to the class I-like SAM-binding methyltransferase superfamily. RNA methyltransferase RlmE family.

The protein localises to the cytoplasm. It catalyses the reaction uridine(2552) in 23S rRNA + S-adenosyl-L-methionine = 2'-O-methyluridine(2552) in 23S rRNA + S-adenosyl-L-homocysteine + H(+). Specifically methylates the uridine in position 2552 of 23S rRNA at the 2'-O position of the ribose in the fully assembled 50S ribosomal subunit. The sequence is that of Ribosomal RNA large subunit methyltransferase E from Wolbachia sp. subsp. Brugia malayi (strain TRS).